A 354-amino-acid polypeptide reads, in one-letter code: Methionine import ATP-binding protein MetN (354 aa).

Residues 8–250 form the ABC transporter domain; that stretch reads LDHIDITFRQ…PKEALTQKFI (243 aa). Position 42-49 (42-49) interacts with ATP; the sequence is GYSGAGKS.

Belongs to the ABC transporter superfamily. Methionine importer (TC 3.A.1.24) family. As to quaternary structure, the complex is composed of two ATP-binding proteins (MetN), two transmembrane proteins (MetI) and a solute-binding protein (MetQ).

The protein resides in the cell membrane. The enzyme catalyses L-methionine(out) + ATP + H2O = L-methionine(in) + ADP + phosphate + H(+). The catalysed reaction is D-methionine(out) + ATP + H2O = D-methionine(in) + ADP + phosphate + H(+). Part of the ABC transporter complex MetNIQ involved in methionine import. Responsible for energy coupling to the transport system. The sequence is that of Methionine import ATP-binding protein MetN from Streptococcus pyogenes serotype M18 (strain MGAS8232).